A 363-amino-acid chain; its full sequence is UDP-3-O-acylglucosamine N-acyltransferase (363 aa).

Histidine 237 serves as the catalytic Proton acceptor. The disordered stretch occupies residues glutamate 338–serine 363.

The protein belongs to the transferase hexapeptide repeat family. LpxD subfamily. As to quaternary structure, homotrimer.

The catalysed reaction is a UDP-3-O-[(3R)-3-hydroxyacyl]-alpha-D-glucosamine + a (3R)-hydroxyacyl-[ACP] = a UDP-2-N,3-O-bis[(3R)-3-hydroxyacyl]-alpha-D-glucosamine + holo-[ACP] + H(+). It participates in bacterial outer membrane biogenesis; LPS lipid A biosynthesis. Catalyzes the N-acylation of UDP-3-O-acylglucosamine using 3-hydroxyacyl-ACP as the acyl donor. Is involved in the biosynthesis of lipid A, a phosphorylated glycolipid that anchors the lipopolysaccharide to the outer membrane of the cell. This is UDP-3-O-acylglucosamine N-acyltransferase from Synechococcus sp. (strain JA-2-3B'a(2-13)) (Cyanobacteria bacterium Yellowstone B-Prime).